The chain runs to 309 residues: Aspartate carbamoyltransferase catalytic subunit (309 aa).

Arg58 and Thr59 together coordinate carbamoyl phosphate. L-aspartate is bound at residue Lys86. Residues Arg108, His136, and Gln139 each coordinate carbamoyl phosphate. Arg170 and Arg224 together coordinate L-aspartate. Gly266 and Pro267 together coordinate carbamoyl phosphate.

It belongs to the aspartate/ornithine carbamoyltransferase superfamily. ATCase family. As to quaternary structure, heterododecamer (2C3:3R2) of six catalytic PyrB chains organized as two trimers (C3), and six regulatory PyrI chains organized as three dimers (R2).

It carries out the reaction carbamoyl phosphate + L-aspartate = N-carbamoyl-L-aspartate + phosphate + H(+). The protein operates within pyrimidine metabolism; UMP biosynthesis via de novo pathway; (S)-dihydroorotate from bicarbonate: step 2/3. In terms of biological role, catalyzes the condensation of carbamoyl phosphate and aspartate to form carbamoyl aspartate and inorganic phosphate, the committed step in the de novo pyrimidine nucleotide biosynthesis pathway. In Campylobacter curvus (strain 525.92), this protein is Aspartate carbamoyltransferase catalytic subunit.